Here is a 557-residue protein sequence, read N- to C-terminus: Protein Red (557 aa).

The segment at Met1–Glu90 is disordered. Positions Asp16 to Ser25 are enriched in basic and acidic residues. The span at Thr42–Ser53 shows a compositional bias: low complexity. N6-acetyllysine occurs at positions 98 and 137. A Glycyl lysine isopeptide (Lys-Gly) (interchain with G-Cter in SUMO2) cross-link involves residue Lys151. The tract at residues Lys181–Lys205 is disordered. The residue at position 287 (Ser287) is a Phosphoserine. The span at Arg294–Lys303 shows a compositional bias: basic residues. The interval Arg294–Ser402 is disordered. A compositionally biased stretch (basic and acidic residues) spans Gly304–Glu313. Glycyl lysine isopeptide (Lys-Gly) (interchain with G-Cter in SUMO2) cross-links involve residues Lys310 and Lys331. Residues Thr332–Lys398 show a composition bias toward basic and acidic residues. Repeat copies occupy residues Arg342 to Glu343, Arg344 to Glu345, Arg346 to Asp347, Arg348 to Glu349, Arg350 to Asp351, Arg352 to Asp353, Arg354 to Glu355, Arg356 to Asp357, Arg358 to Glu359, Arg360 to Asp361, Arg362 to Glu363, Arg364 to Glu365, Arg366 to Glu367, Arg368 to Asp369, Arg370 to Glu371, Arg372 to Glu373, and Arg374 to Glu375. Positions Arg342–Glu375 are 17 X 2 AA tandem repeats of R-[ED]. Glycyl lysine isopeptide (Lys-Gly) (interchain with G-Cter in SUMO2) cross-links involve residues Lys386, Lys388, Lys404, and Lys408. Phosphoserine is present on residues Ser417 and Ser460. Thr485 carries the post-translational modification Phosphothreonine. Residues Lys496, Lys501, and Lys509 each participate in a glycyl lysine isopeptide (Lys-Gly) (interchain with G-Cter in SUMO2) cross-link. Phosphoserine is present on Ser536. Residues Lys541, Lys543, and Lys553 each participate in a glycyl lysine isopeptide (Lys-Gly) (interchain with G-Cter in SUMO2) cross-link.

It belongs to the RED family. In terms of assembly, component of the spliceosome B complex. Interacts with SMU1. Interacts with MAD1L1. May interact with DHX15. As to expression, ubiquitous.

It is found in the nucleus. The protein resides in the nucleoplasm. Its subcellular location is the chromosome. It localises to the cytoplasm. The protein localises to the cytoskeleton. It is found in the spindle pole. In terms of biological role, involved in pre-mRNA splicing as a component of the spliceosome. Auxiliary spliceosomal protein that regulates selection of alternative splice sites in a small set of target pre-mRNA species. Required for normal mitotic cell cycle progression. Recruits MAD1L1 and MAD2L1 to kinetochores, and is required to trigger the spindle assembly checkpoint. Required for normal accumulation of SMU1. The polypeptide is Protein Red (Ik) (Mus musculus (Mouse)).